A 252-amino-acid chain; its full sequence is Triosephosphate isomerase (252 aa).

10-12 (NWK) lines the substrate pocket. Catalysis depends on His-96, which acts as the Electrophile. The active-site Proton acceptor is Glu-168. Residues Gly-174, Ser-214, and 235–236 (GG) each bind substrate.

This sequence belongs to the triosephosphate isomerase family. In terms of assembly, homodimer.

It is found in the cytoplasm. The catalysed reaction is D-glyceraldehyde 3-phosphate = dihydroxyacetone phosphate. Its pathway is carbohydrate biosynthesis; gluconeogenesis. It functions in the pathway carbohydrate degradation; glycolysis; D-glyceraldehyde 3-phosphate from glycerone phosphate: step 1/1. Involved in the gluconeogenesis. Catalyzes stereospecifically the conversion of dihydroxyacetone phosphate (DHAP) to D-glyceraldehyde-3-phosphate (G3P). In Streptococcus gordonii (strain Challis / ATCC 35105 / BCRC 15272 / CH1 / DL1 / V288), this protein is Triosephosphate isomerase.